Here is a 3092-residue protein sequence, read N- to C-terminus: Inhibitory regulator protein IRA1 (3092 aa).

Disordered stretches follow at residues 375-430 (HLHH…MASL) and 450-487 (LGQANTSTSTTAATTKTDADTPSTMNTNNNNNNNNSAN). Positions 379–400 (SSSSSKTTNTNSPNSISKTSIK) are enriched in low complexity. Polar residues predominate over residues 401-430 (QSSVNASGNVSPSQFSTGNDASPTSPMASL). Over residues 455–487 (TSTSTTAATTKTDADTPSTMNTNNNNNNNNSAN) the composition is skewed to low complexity. Serine 497 and serine 915 each carry phosphoserine. Disordered regions lie at residues 946 to 988 (SGVP…VLSS) and 1003 to 1023 (TILKNIKSPKPNKTKKIADDK). The span at 965–988 (QSPYSSPPQLQQSDLPSPLSVLSS) shows a compositional bias: low complexity. Residue serine 1342 is modified to Phosphoserine. The Ras-GAP domain maps to 1725–1930 (NASHILVTEL…DKIFNFLSEL (206 aa)). 2 positions are modified to phosphoserine; by PKA: serine 1753 and serine 3004.

The protein localises to the cytoplasm. Its function is as follows. Inhibitory regulator of the Ras-cyclic AMP pathway in S.cerevisiae. Stimulates the GTPase activity of Ras proteins. This Saccharomyces cerevisiae (strain ATCC 204508 / S288c) (Baker's yeast) protein is Inhibitory regulator protein IRA1 (IRA1).